The primary structure comprises 236 residues: Demethylmenaquinone methyltransferase (236 aa).

Residues threonine 62, aspartate 80, 107-108, and serine 124 each bind S-adenosyl-L-methionine; that span reads DA.

Belongs to the class I-like SAM-binding methyltransferase superfamily. MenG/UbiE family.

The enzyme catalyses a 2-demethylmenaquinol + S-adenosyl-L-methionine = a menaquinol + S-adenosyl-L-homocysteine + H(+). Its pathway is quinol/quinone metabolism; menaquinone biosynthesis; menaquinol from 1,4-dihydroxy-2-naphthoate: step 2/2. In terms of biological role, methyltransferase required for the conversion of demethylmenaquinol (DMKH2) to menaquinol (MKH2). This is Demethylmenaquinone methyltransferase from Thermobifida fusca (strain YX).